Reading from the N-terminus, the 327-residue chain is Putative hydroxymethylpyrimidine/phosphomethylpyrimidine kinase C18B5.05c (327 aa).

Position 54 (glutamine 54) interacts with 4-amino-5-hydroxymethyl-2-methylpyrimidine.

It belongs to the ThiD family.

Its subcellular location is the cytoplasm. The protein localises to the nucleus. It carries out the reaction 4-amino-5-hydroxymethyl-2-methylpyrimidine + ATP = 4-amino-2-methyl-5-(phosphooxymethyl)pyrimidine + ADP + H(+). It catalyses the reaction 4-amino-2-methyl-5-(phosphooxymethyl)pyrimidine + ATP = 4-amino-2-methyl-5-(diphosphooxymethyl)pyrimidine + ADP. It participates in cofactor biosynthesis; thiamine diphosphate biosynthesis; 4-amino-2-methyl-5-diphosphomethylpyrimidine from 5-amino-1-(5-phospho-D-ribosyl)imidazole: step 2/3. The protein operates within cofactor biosynthesis; thiamine diphosphate biosynthesis; 4-amino-2-methyl-5-diphosphomethylpyrimidine from 5-amino-1-(5-phospho-D-ribosyl)imidazole: step 3/3. Catalyzes the phosphorylation of hydroxymethylpyrimidine phosphate (HMP-P) to HMP-PP, and of HMP to HMP-P. The protein is Putative hydroxymethylpyrimidine/phosphomethylpyrimidine kinase C18B5.05c of Schizosaccharomyces pombe (strain 972 / ATCC 24843) (Fission yeast).